The primary structure comprises 351 residues: Histidine protein kinase SaeS (351 aa).

Helical transmembrane passes span 9–29 and 40–60; these read IIIG…IAYI and TLTL…SIFI. In terms of domain architecture, HAMP spans 61–114; the sequence is NPLIQKIKQFNIKTKQFANGNYASNDKTFNSPKEIYELNQSFNKMASEITQQMN. The Histidine kinase domain occupies 129–348; it reads NLAHDLKTPL…TMTVTLHKLD (220 aa). Histidine 132 carries the phosphohistidine; by autocatalysis modification.

Post-translationally, autophosphorylated.

The protein localises to the cell membrane. The catalysed reaction is ATP + protein L-histidine = ADP + protein N-phospho-L-histidine.. In terms of biological role, member of the two-component regulatory system SaeR/SaeS involved in the regulation of staphylococcal virulence factors in a strain-dependent fashion. Probably functions as a membrane-associated protein kinase that upon sensing the appropriate signal, autophosphorylates and in turn activates the cytosolic response regulator SaeR. The sequence is that of Histidine protein kinase SaeS (saeS) from Staphylococcus aureus (strain bovine RF122 / ET3-1).